The primary structure comprises 501 residues: Glycine betaine/proline/ectoine/pipecolic acid transporter OusA (501 aa).

Residues 1–38 are Cytoplasmic-facing; that stretch reads MKLKRKRVKPIALDDVTIIDDGRLRKAITAAALGNAME. Residues 39-59 form a helical membrane-spanning segment; that stretch reads WFDFGVYGFVAYALGQVFFPG. Over 60 to 66 the chain is Periplasmic; the sequence is ADPGVQM. The helical transmembrane segment at 67-87 threads the bilayer; that stretch reads IAALATFSVPFLIRPLGGVFF. Topologically, residues 88–98 are cytoplasmic; sequence GALGDKYGRQK. Residues 99 to 119 traverse the membrane as a helical segment; the sequence is ILAITIIIMSISTFCIGLIPS. Topologically, residues 120 to 122 are periplasmic; the sequence is YER. A helical membrane pass occupies residues 123-143; sequence IGIWAPILLLLAKMAQGFSVG. Over 144 to 170 the chain is Cytoplasmic; sequence GEYTGASIFVAEYSPDRKRGFMGSWLD. The chain crosses the membrane as a helical span at residues 171–191; that stretch reads FGSIAGFVLGAGVVVLISTLI. Residues 192–195 lie on the Periplasmic side of the membrane; that stretch reads GEQA. A helical membrane pass occupies residues 196 to 216; sequence FLAWGWRLPFFLALPLGLIGL. The Cytoplasmic segment spans residues 217 to 261; the sequence is YLRHALEETPAFRQHVEKLEQNDRDGLKAGPGVSFREIATHHWKS. The helical transmembrane segment at 262–282 threads the bilayer; sequence LLVCIGLVIATNVTYYMLLTY. Over 283–298 the chain is Periplasmic; that stretch reads MPSYLSHSLHYSENHG. Residues 299–319 traverse the membrane as a helical segment; that stretch reads VLIIIAIMIGMLFVQPVMGLL. The Cytoplasmic portion of the chain corresponds to 320 to 326; sequence SDRFGRK. A helical membrane pass occupies residues 327–347; sequence PFVVIGSVAMFFLAVPSFMLI. Over 348–350 the chain is Periplasmic; that stretch reads NSD. The helical transmembrane segment at 351-371 threads the bilayer; sequence IIGLIFLGLLMLAVILNAFTG. The Cytoplasmic portion of the chain corresponds to 372-391; that stretch reads VMASTLPALFPTHIRYSALA. The helical transmembrane segment at 392 to 412 threads the bilayer; the sequence is SAFNISVLIAGLTPTVAAWLV. Residues 413–417 lie on the Periplasmic side of the membrane; it reads ESSQN. A helical transmembrane segment spans residues 418 to 438; it reads LYMPAYYLMVIAVIGLLTGLF. Over 439–501 the chain is Cytoplasmic; that stretch reads MKETANKPLK…LVAQHPRIND (63 aa). Positions 461–495 form a coiled coil; sequence KEILQEHHDNIEHKIEDITQQIAELEAKRQLLVAQ.

It belongs to the major facilitator superfamily. Sugar transporter (TC 2.A.1.1) family.

The protein resides in the cell inner membrane. Involved in uptake and accumulation of various osmoprotectants. Allows the uptake of glycine betaine, proline, ectoine, and pipecolic acid. May be a contributory factor in the infection progression within the host. The sequence is that of Glycine betaine/proline/ectoine/pipecolic acid transporter OusA from Dickeya dadantii (strain 3937) (Erwinia chrysanthemi (strain 3937)).